A 196-amino-acid chain; its full sequence is Probable malonic semialdehyde reductase RutE (196 aa).

It belongs to the nitroreductase family. HadB/RutE subfamily. FMN serves as cofactor.

The enzyme catalyses 3-hydroxypropanoate + NADP(+) = 3-oxopropanoate + NADPH + H(+). In terms of biological role, may reduce toxic product malonic semialdehyde to 3-hydroxypropionic acid, which is excreted. The chain is Probable malonic semialdehyde reductase RutE from Cronobacter sakazakii (strain ATCC BAA-894) (Enterobacter sakazakii).